Consider the following 358-residue polypeptide: Alanine racemase (358 aa).

The Proton acceptor; specific for D-alanine role is filled by lysine 35. Lysine 35 bears the N6-(pyridoxal phosphate)lysine mark. Residue arginine 130 participates in substrate binding. The Proton acceptor; specific for L-alanine role is filled by tyrosine 255. Position 303 (methionine 303) interacts with substrate.

The protein belongs to the alanine racemase family. Requires pyridoxal 5'-phosphate as cofactor.

The catalysed reaction is L-alanine = D-alanine. It functions in the pathway amino-acid biosynthesis; D-alanine biosynthesis; D-alanine from L-alanine: step 1/1. In terms of biological role, catalyzes the interconversion of L-alanine and D-alanine. May also act on other amino acids. The sequence is that of Alanine racemase (alr) from Shewanella baltica (strain OS155 / ATCC BAA-1091).